A 701-amino-acid chain; its full sequence is A-type ATP synthase subunit I (701 aa).

The next 10 membrane-spanning stretches (helical) occupy residues Trp340–Phe360, Phe363–Tyr379, Ile388–Leu408, Leu435–Phe455, Met468–Ile488, Phe498–Met518, Gly555–Val575, Trp583–Leu603, Val612–Leu632, and Ile649–Ile669.

Belongs to the V-ATPase 116 kDa subunit family. As to quaternary structure, has multiple subunits with at least A(3), B(3), C, D, E, F, H, I and proteolipid K(x).

It is found in the cell membrane. Functionally, component of the A-type ATP synthase that produces ATP from ADP in the presence of a proton gradient across the membrane. This chain is A-type ATP synthase subunit I, found in Saccharolobus solfataricus (strain ATCC 35092 / DSM 1617 / JCM 11322 / P2) (Sulfolobus solfataricus).